The sequence spans 219 residues: Ribosome maturation factor RimP (219 aa).

2 disordered regions span residues 1 to 38 (MTQRGRAAKPTGPTGRPRRTGGQRGTDRVGRGGDLATR) and 189 to 219 (VEFTRPGEPDAFDGTDEAGDFDDDDVEDEER). Over residues 198–219 (DAFDGTDEAGDFDDDDVEDEER) the composition is skewed to acidic residues.

The protein belongs to the RimP family.

The protein resides in the cytoplasm. In terms of biological role, required for maturation of 30S ribosomal subunits. The chain is Ribosome maturation factor RimP from Salinispora arenicola (strain CNS-205).